Consider the following 222-residue polypeptide: Kinetochore protein Spc25 (222 aa).

Positions 51 to 86 (RHQRKVGKLQKVLMERREELDKRVSFIEELDRELEA) form a coiled coil.

It belongs to the SPC25 family. As to quaternary structure, component of the Ndc80 complex, which is composed of Ndc80, Nuf2 and Spc25.

Its subcellular location is the nucleus. The protein localises to the chromosome. It localises to the centromere. The protein resides in the kinetochore. Its function is as follows. Acts as a component of the essential kinetochore-associated Ndc80 complex, which is required for chromosome segregation and spindle checkpoint activity during meiosis and mitosis. Required for kinetochore integrity and the organization of stable microtubule binding sites in the outer plate of the kinetochore. Participates in SAC signaling that responds specifically to disruptions in spindle microtubule dynamics. The NDC80 complex synergistically enhances the affinity of the SKA1 complex for microtubules and may allow the NDC80 complex to track depolymerizing microtubules. The protein is Kinetochore protein Spc25 of Drosophila mauritiana (Fruit fly).